Consider the following 559-residue polypeptide: N-acetylglucosamine-6-sulfatase (559 aa).

The disordered stretch occupies residues 1-26 (MRFLSLAPDRPRRGGPRHLPSGSPAP). Positions 1–47 (MRFLSLAPDRPRRGGPRHLPSGSPAPPPPPPLLLLLLLGGCLGVSGA) are cleaved as a signal peptide. Residues aspartate 62, aspartate 63, and cysteine 98 each contribute to the Ca(2+) site. Cysteine 98 functions as the Nucleophile in the catalytic mechanism. Residue cysteine 98 is modified to 3-oxoalanine (Cys). 7 N-linked (GlcNAc...) asparagine glycosylation sites follow: asparagine 118, asparagine 124, asparagine 190, asparagine 205, asparagine 217, asparagine 286, and asparagine 324. Ca(2+) is bound by residues aspartate 333 and asparagine 334. Residues asparagine 369, asparagine 394, asparagine 412, asparagine 429, asparagine 456, and asparagine 487 are each glycosylated (N-linked (GlcNAc...) asparagine). Serine 548 carries the post-translational modification Phosphoserine.

Belongs to the sulfatase family. The cofactor is Ca(2+). Processed by internal peptidase. Post-translationally, the conversion to 3-oxoalanine (also known as C-formylglycine, FGly), of a serine or cysteine residue in prokaryotes and of a cysteine residue in eukaryotes, is critical for catalytic activity.

The protein resides in the lysosome. It catalyses the reaction Hydrolysis of the 6-sulfate groups of the N-acetyl-D-glucosamine 6-sulfate units of heparan sulfate and keratan sulfate.. Functionally, hydrolyzes 6-sulfate groups in N-acetyl-d-glucosaminide units of heparin sulfate and keratan sulfate. This is N-acetylglucosamine-6-sulfatase (GNS) from Capra hircus (Goat).